We begin with the raw amino-acid sequence, 447 residues long: MTTILKHLPAGQRIGIAFSGGLDTSAALLWMRQKGAVPYAYTANLGQPDEDDYDAIPRRAMEYGAENARLIDCRKQLVAEGIAAIQCGAFHNTTGGLTYFNTTPLGRAVTGTMLVAAMKEDGVNIWGDGSTYKGNDIERFYRYGLLTNVELQIYKPWLDTDFIDELGGRHEMSEFMIACGFDYKMSVEKAYSTDSNMLGATHEAKDLEFLNSSVKIVNPIMGVKFWDESVKIPAEVVTVRFEQGHPVALNGKTFSDDVEMMLEANRIGGRHGLGMSDQIENRIIEAKSRGIYEAPGMALLHIAYERLLTGIHNEDTIEQYHSHGRQLGKLLYQGRWFDSQALMLRDGLQRWVASQITGEVTLELRRGNDYSILNTVSDNLTYKPERLTMEKGDSVFSPDDRIGQLTMRNLDITDTREKLFGYAKAGLLTASSATGLPQVENLENKGK.

ATP is bound by residues 17 to 25 (AFSGGLDTS) and Ala43. Tyr99 lines the L-citrulline pocket. Residues Gly129 and Thr131 each contribute to the ATP site. 3 residues coordinate L-aspartate: Thr131, Asn135, and Asp136. Asn135 contributes to the L-citrulline binding site. Residue Asp136 coordinates ATP. 2 residues coordinate L-citrulline: Arg139 and Ser192. Asp194 serves as a coordination point for ATP. Residues Thr201, Glu203, and Glu280 each contribute to the L-citrulline site.

This sequence belongs to the argininosuccinate synthase family. Type 2 subfamily. In terms of assembly, homotetramer.

The protein localises to the cytoplasm. The catalysed reaction is L-citrulline + L-aspartate + ATP = 2-(N(omega)-L-arginino)succinate + AMP + diphosphate + H(+). Its pathway is amino-acid biosynthesis; L-arginine biosynthesis; L-arginine from L-ornithine and carbamoyl phosphate: step 2/3. This Salmonella heidelberg (strain SL476) protein is Argininosuccinate synthase.